The sequence spans 485 residues: NADH-quinone oxidoreductase subunit N (485 aa).

Transmembrane regions (helical) follow at residues 3 to 23, 30 to 50, 67 to 87, 96 to 116, 120 to 140, 154 to 174, 202 to 222, 247 to 267, 271 to 291, 299 to 319, 332 to 352, 375 to 395, 411 to 431, and 453 to 473; these read LFMP…TDLF, HLAY…VLNW, YASF…MASV, FQGE…MMAS, LITM…LVGF, LLLG…IYGF, FILG…AVPF, AAGF…PLAL, WALI…VLAI, MLGY…AAVG, LFYL…IIAI, ASAL…AGFL, WLMI…FNVI, and LALG…ETLL.

The protein belongs to the complex I subunit 2 family. As to quaternary structure, NDH-1 is composed of 14 different subunits. Subunits NuoA, H, J, K, L, M, N constitute the membrane sector of the complex.

The protein localises to the cell membrane. It catalyses the reaction a quinone + NADH + 5 H(+)(in) = a quinol + NAD(+) + 4 H(+)(out). Functionally, NDH-1 shuttles electrons from NADH, via FMN and iron-sulfur (Fe-S) centers, to quinones in the respiratory chain. The immediate electron acceptor for the enzyme in this species is believed to be ubiquinone. Couples the redox reaction to proton translocation (for every two electrons transferred, four hydrogen ions are translocated across the cytoplasmic membrane), and thus conserves the redox energy in a proton gradient. In Dehalococcoides mccartyi (strain ATCC BAA-2100 / JCM 16839 / KCTC 5957 / BAV1), this protein is NADH-quinone oxidoreductase subunit N.